Consider the following 61-residue polypeptide: U-poneritoxin(01)-Om5b (61 aa).

Positions 1–23 (MKLSALSLAFAIILMMTIMYTKA) are cleaved as a signal peptide. The propeptide occupies 24–41 (DADASADAEADADAEAEA). Glutamine 59 is modified (glutamine amide).

This sequence belongs to the formicidae venom precursor-01 superfamily. Post-translationally, truncated sequences of this peptide have also been found in the venom. It is possible they have been cleaved in the venom. In terms of tissue distribution, expressed by the venom gland.

The protein localises to the secreted. Its function is as follows. Acidic peptide with potent hemolytic activities. It also shows low antimicrobial activities against E.coli (MIC=50uM), as well as histamine-releasing activity (28.3% at 10 uM). Does not have activity against S.aureus, and S.cerevisiae. This chain is U-poneritoxin(01)-Om5b, found in Odontomachus monticola (Trap-jaw ant).